A 183-amino-acid polypeptide reads, in one-letter code: Large ribosomal subunit protein eL18 (183 aa).

The tract at residues R150–V183 is disordered.

Belongs to the eukaryotic ribosomal protein eL18 family.

The protein resides in the cytoplasm. This is Large ribosomal subunit protein eL18 (RpL18) from Bombyx mori (Silk moth).